Consider the following 225-residue polypeptide: uncharacterized protein (225 aa).

4 N-linked (GlcNAc...) asparagine; by host glycosylation sites follow: asparagine 48, asparagine 58, asparagine 105, and asparagine 108. The chain crosses the membrane as a helical span at residues 156-178; the sequence is LWGYLKQPLVMVGIAAVVGYLIY.

Belongs to the ascovirus HvAv ORF58 family.

It is found in the membrane. This is an uncharacterized protein from Heliothis virescens ascovirus 3e (HvAV-3e).